The following is a 506-amino-acid chain: Cysteine--tRNA ligase (506 aa).

C34 is a binding site for Zn(2+). Residues 36–46 (PTVYDFAHIGN) carry the 'HIGH' region motif. Zn(2+) contacts are provided by C230, H269, and E273. Positions 302-306 (KMSKS) match the 'KMSKS' region motif. K305 is a binding site for ATP.

Belongs to the class-I aminoacyl-tRNA synthetase family. In terms of assembly, monomer. The cofactor is Zn(2+).

Its subcellular location is the cytoplasm. The enzyme catalyses tRNA(Cys) + L-cysteine + ATP = L-cysteinyl-tRNA(Cys) + AMP + diphosphate. The polypeptide is Cysteine--tRNA ligase (Brucella suis biovar 1 (strain 1330)).